Reading from the N-terminus, the 360-residue chain is GTPase Obg (360 aa).

Positions 1-156 constitute an Obg domain; that stretch reads MFVDSVEIII…KCVRLELKLI (156 aa). The OBG-type G domain occupies 157-360; sequence ADIGLVGFPN…LKFVLLKALQ (204 aa). GTP is bound by residues 163–170, 188–192, 210–213, 279–282, and 341–343; these read GFPNAGKS, FTTLV, DIPG, NKCD, and SAV. The Mg(2+) site is built by Ser170 and Thr190.

This sequence belongs to the TRAFAC class OBG-HflX-like GTPase superfamily. OBG GTPase family. As to quaternary structure, monomer. The cofactor is Mg(2+).

It is found in the cytoplasm. Functionally, an essential GTPase which binds GTP, GDP and possibly (p)ppGpp with moderate affinity, with high nucleotide exchange rates and a fairly low GTP hydrolysis rate. Plays a role in control of the cell cycle, stress response, ribosome biogenesis and in those bacteria that undergo differentiation, in morphogenesis control. The protein is GTPase Obg of Helicobacter pylori (strain J99 / ATCC 700824) (Campylobacter pylori J99).